A 2029-amino-acid polypeptide reads, in one-letter code: Tyrosine-protein phosphatase Lar (2029 aa).

The signal sequence occupies residues 1–32 (MGLQMTAARPIAALSLLVLSLLTWTHPTIVDA). At 33–1377 (AHPPEIIRKP…SVNRNKDEPE (1345 aa)) the chain is on the extracellular side. Ig-like C2-type domains follow at residues 36–128 (PEII…ATLT), 140–224 (PVIT…KATN), and 234–316 (PTFS…VSVV). 2 disulfides stabilise this stretch: cysteine 57-cysteine 111 and cysteine 161-cysteine 209. 70–82 (RKNGKKVSGTQSR) is a heparin binding site. Residues asparagine 176, asparagine 253, and asparagine 298 are each glycosylated (N-linked (GlcNAc...) asparagine). Cysteine 256 and cysteine 301 are oxidised to a cystine. 9 Fibronectin type-III domains span residues 324 to 414 (APTD…TGET), 419 to 513 (APRN…AQQG), 517 to 608 (QPSN…TKQY), 613 to 707 (PPRN…TQED), 711 to 810 (DPQD…TPGG), 815 to 911 (PTVS…TPGG), 912 to 1005 (PPSN…TERD), 1009 to 1102 (APMS…IKPE), and 1104 to 1206 (VPLN…TQMA). 5 N-linked (GlcNAc...) asparagine glycosylation sites follow: asparagine 553, asparagine 616, asparagine 666, asparagine 721, and asparagine 774. Asparagine 915 and asparagine 962 each carry an N-linked (GlcNAc...) asparagine glycan. Asparagine 1183 and asparagine 1304 each carry an N-linked (GlcNAc...) asparagine glycan. The span at 1346–1358 (REAPPGERPHRPD) shows a compositional bias: basic and acidic residues. The segment at 1346-1369 (REAPPGERPHRPDPNWPAEPEVSV) is disordered. Residues 1378–1402 (ILWVVLPLMVSTFIVSTALIVLCVV) traverse the membrane as a helical segment. Topologically, residues 1403-2029 (KRRRQPCKTP…YLGSFDNYTN (627 aa)) are cytoplasmic. Tyrosine-protein phosphatase domains are found at residues 1474–1729 (FSQE…ILEA) and 1761–2020 (MEVE…ALEY). At threonine 1572 the chain carries Phosphothreonine. Substrate contacts are provided by residues aspartate 1638, 1670 to 1676 (CSAGVGR), and glutamine 1714. Cysteine 1670 acts as the Phosphocysteine intermediate in catalysis. Cysteine 1961 serves as the catalytic Phosphocysteine intermediate.

It belongs to the protein-tyrosine phosphatase family. Receptor class 2A subfamily. As to expression, selectively expressed in a subset of axons and pioneer neurons in the embryo.

Its subcellular location is the membrane. The enzyme catalyses O-phospho-L-tyrosyl-[protein] + H2O = L-tyrosyl-[protein] + phosphate. Possible cell adhesion receptor. It possesses an intrinsic protein tyrosine phosphatase activity (PTPase). It controls motor axon guidance. In the developing eye, has a role in normal axonal targeting of the R7 photoreceptor, where it negatively regulates bdl. Inhibits bdl cell adhesion activity in vitro; this effect is independent of its PTPase function. In Drosophila melanogaster (Fruit fly), this protein is Tyrosine-protein phosphatase Lar (Lar).